The primary structure comprises 339 residues: Glucokinase (339 aa).

Residue 16–21 (GDIGGT) participates in ATP binding.

The protein belongs to the bacterial glucokinase family.

It localises to the cytoplasm. It carries out the reaction D-glucose + ATP = D-glucose 6-phosphate + ADP + H(+). The chain is Glucokinase from Rhizobium meliloti (strain 1021) (Ensifer meliloti).